A 167-amino-acid polypeptide reads, in one-letter code: Regulatory protein RecX (167 aa).

The segment at 19–49 (ESELRRKLASQPFSAKGHWGKQTGRSDNEPV) is disordered.

It belongs to the RecX family.

Its subcellular location is the cytoplasm. Its function is as follows. Modulates RecA activity. The polypeptide is Regulatory protein RecX (Yersinia enterocolitica serotype O:8 / biotype 1B (strain NCTC 13174 / 8081)).